The primary structure comprises 683 residues: Transforming growth factor-beta-induced protein ig-h3 (683 aa).

A signal peptide spans methionine 1–alanine 23. Serine 37 is subject to Phosphoserine. The EMI domain maps to glycine 45–alanine 99. Cystine bridges form between cysteine 49–cysteine 85, cysteine 74–cysteine 339, cysteine 84–cysteine 97, cysteine 214–cysteine 317, and cysteine 473–cysteine 478. Residue cysteine 65 is modified to S-cysteinyl cysteine. 4 FAS1 domains span residues leucine 103–isoleucine 236, threonine 240–leucine 371, serine 375–leucine 498, and methionine 502–leucine 632. A Cell attachment site motif is present at residues arginine 642 to aspartate 644.

In terms of assembly, binds to type I, II, and IV collagens. Gamma-carboxylation is controversial. Gamma-carboxyglutamated; gamma-carboxyglutamate residues are formed by vitamin K dependent carboxylation; this may be required for calcium binding. According to a more recent report, does not contain vitamin K-dependent gamma-carboxyglutamate residues. In terms of processing, the EMI domain contains 2 expected intradomain disulfide bridges (Cys-49-Cys85 and Cys-84-Cys-97) and one unusual interdomain disulfide bridge to the second FAS1 domain (Cys-74-Cys-339). This arrangement violates the predicted disulfide bridge pattern of an EMI domain. Expressed in heart, kidney, liver, skeletal muscle, testis, thyroid and uterus.

It localises to the secreted. It is found in the extracellular space. Its subcellular location is the extracellular matrix. Plays a role in cell adhesion. May play a role in cell-collagen interactions. The sequence is that of Transforming growth factor-beta-induced protein ig-h3 (Tgfbi) from Mus musculus (Mouse).